Here is a 109-residue protein sequence, read N- to C-terminus: Cell division protein ZapA (109 aa).

Residues 21-97 (PEQQEALNQA…QTIEQALVEQ (77 aa)) adopt a coiled-coil conformation.

It belongs to the ZapA family. Type 1 subfamily. In terms of assembly, homodimer. Interacts with FtsZ.

The protein resides in the cytoplasm. Functionally, activator of cell division through the inhibition of FtsZ GTPase activity, therefore promoting FtsZ assembly into bundles of protofilaments necessary for the formation of the division Z ring. It is recruited early at mid-cell but it is not essential for cell division. In Sodalis glossinidius (strain morsitans), this protein is Cell division protein ZapA.